The primary structure comprises 71 residues: Small ribosomal subunit protein bS21 (71 aa).

The protein belongs to the bacterial ribosomal protein bS21 family.

The sequence is that of Small ribosomal subunit protein bS21 from Wigglesworthia glossinidia brevipalpis.